Reading from the N-terminus, the 281-residue chain is Phosphatidylglycerol--prolipoprotein diacylglyceryl transferase (281 aa).

Transmembrane regions (helical) follow at residues 11 to 31 (IIFT…VISF), 57 to 77 (LLYS…IIFY), 89 to 109 (VFYI…AIIV), 121 to 141 (ILEI…AGRI), 194 to 214 (PTQL…IYFF), 222 to 242 (GSIS…IEFF), and 255 to 275 (IITM…IIMY). Arg140 contributes to the a 1,2-diacyl-sn-glycero-3-phospho-(1'-sn-glycerol) binding site.

This sequence belongs to the Lgt family.

It is found in the cell inner membrane. It catalyses the reaction L-cysteinyl-[prolipoprotein] + a 1,2-diacyl-sn-glycero-3-phospho-(1'-sn-glycerol) = an S-1,2-diacyl-sn-glyceryl-L-cysteinyl-[prolipoprotein] + sn-glycerol 1-phosphate + H(+). It functions in the pathway protein modification; lipoprotein biosynthesis (diacylglyceryl transfer). Functionally, catalyzes the transfer of the diacylglyceryl group from phosphatidylglycerol to the sulfhydryl group of the N-terminal cysteine of a prolipoprotein, the first step in the formation of mature lipoproteins. The sequence is that of Phosphatidylglycerol--prolipoprotein diacylglyceryl transferase from Buchnera aphidicola subsp. Acyrthosiphon pisum (strain 5A).